An 846-amino-acid polypeptide reads, in one-letter code: Inactive cap-specific mRNA (nucleoside-2'-O-)-methyltransferase 1B (846 aa).

The segment at 30–50 is disordered; it reads DDEDDFVDDPSPTEQKTKAEK. A G-patch domain is found at 44 to 90; sequence QKTKAEKKMERMGYKAGEGLGKNKQGIQEPIAISFREGKAGLGHEQW. The region spanning 184 to 413 is the RrmJ-type SAM-dependent 2'-O-MTase domain; it reads FFLNRSAMKT…ERFVVCKGLR (230 aa).

In Caenorhabditis briggsae, this protein is Inactive cap-specific mRNA (nucleoside-2'-O-)-methyltransferase 1B.